The chain runs to 389 residues: Na(+)/H(+) antiporter NhaA 1 (389 aa).

Helical transmembrane passes span 14–34, 47–67, 87–107, 117–137, 146–166, 171–191, 197–217, 252–272, 280–300, 321–341, and 356–376; these read AGGI…NSPL, FGMS…FLLI, IFPA…YVAF, GWAI…ALLG, VFLL…IALF, LSTL…MLNA, LIWY…SGVH, VAFA…LEGV, MLPL…IFTF, IFAV…ISSL, and LGIL…LHVS.

It belongs to the NhaA Na(+)/H(+) (TC 2.A.33) antiporter family.

Its subcellular location is the cell inner membrane. It catalyses the reaction Na(+)(in) + 2 H(+)(out) = Na(+)(out) + 2 H(+)(in). Functionally, na(+)/H(+) antiporter that extrudes sodium in exchange for external protons. The chain is Na(+)/H(+) antiporter NhaA 1 from Vibrio vulnificus (strain CMCP6).